A 96-amino-acid chain; its full sequence is Small ribosomal subunit protein bS16 (96 aa).

Belongs to the bacterial ribosomal protein bS16 family.

This is Small ribosomal subunit protein bS16 from Anaplasma phagocytophilum (strain HZ).